The chain runs to 164 residues: Prolyl-tRNA editing protein ProX (164 aa).

Belongs to the PRORSD1 family.

The protein localises to the cytoplasm. Its function is as follows. Functions in trans to edit the amino acid moiety from incorrectly charged Ala-tRNA(Pro). Has weak activity on correctly charged tRNA(Ala), tRNA(Gly) as well as tRNA(Cys), tRNA(Met), tRNA(Pro), tRNA(Ser) and tRNA(Leu). This Acetoanaerobium sticklandii (strain ATCC 12662 / DSM 519 / JCM 1433 / CCUG 9281 / NCIMB 10654 / HF) (Clostridium sticklandii) protein is Prolyl-tRNA editing protein ProX (proX).